Here is a 312-residue protein sequence, read N- to C-terminus: Ribosomal protein L11 methyltransferase (312 aa).

Threonine 162, glycine 183, aspartate 205, and asparagine 248 together coordinate S-adenosyl-L-methionine.

This sequence belongs to the methyltransferase superfamily. PrmA family.

It localises to the cytoplasm. The enzyme catalyses L-lysyl-[protein] + 3 S-adenosyl-L-methionine = N(6),N(6),N(6)-trimethyl-L-lysyl-[protein] + 3 S-adenosyl-L-homocysteine + 3 H(+). Methylates ribosomal protein L11. In Anoxybacillus flavithermus (strain DSM 21510 / WK1), this protein is Ribosomal protein L11 methyltransferase.